The chain runs to 185 residues: Ribosome-recycling factor (185 aa).

This sequence belongs to the RRF family.

It is found in the cytoplasm. Responsible for the release of ribosomes from messenger RNA at the termination of protein biosynthesis. May increase the efficiency of translation by recycling ribosomes from one round of translation to another. This Macrococcus caseolyticus (strain JCSC5402) (Macrococcoides caseolyticum) protein is Ribosome-recycling factor.